The following is a 675-amino-acid chain: Vitamin K-dependent protein S (675 aa).

An N-terminal signal peptide occupies residues 1–24; that stretch reads MRVLSARFRVLLACLALVIPVSET. Positions 25-41 are excised as a propeptide; the sequence is NFLSKERASQVLVRKRR. Positions 42-87 constitute a Gla domain; that stretch reads ANTLFEETMKGNLERECIEELCNKEEAREVFENNPETDYFYPKYLG. 4-carboxyglutamate occurs at positions 47, 48, 55, 57, 60, 61, 66, 67, 70, 73, and 77. A disulfide bond links Cys-58 and Cys-63. Residues 88–116 form a thrombin-sensitive region; it reads CLGAFRVGSFHAARQSANAYPDLRSCVKA. One can recognise an EGF-like 1 domain in the interval 117–155; the sequence is ISDQCDPIPCNEDGYLACQDGQAAFTCFCKPGWQGDRCQ. 13 cysteine pairs are disulfide-bonded: Cys-121–Cys-134, Cys-126–Cys-143, Cys-145–Cys-154, Cys-161–Cys-175, Cys-171–Cys-184, Cys-186–Cys-199, Cys-205–Cys-217, Cys-212–Cys-226, Cys-228–Cys-241, Cys-247–Cys-256, Cys-252–Cys-265, Cys-267–Cys-282, and Cys-449–Cys-475. Position 136 is a (3R)-3-hydroxyaspartate (Asp-136). The region spanning 157-200 is the EGF-like 2; calcium-binding domain; that stretch reads DVNECKDPSNVNGGCSQICDNTPGSYHCSCKRGFAMLPNKKDCK. The region spanning 201–242 is the EGF-like 3; calcium-binding domain; sequence DLDECALKPSVCGTAVCKNIPGDFECECPDGYRYDPSSKSCK. The EGF-like 4; calcium-binding domain maps to 243–283; sequence DVDECSENMCAQLCVNFPGGYSCYCDGKKGFKLAQDQKSCE. Laminin G-like domains follow at residues 299 to 475 and 484 to 665; these read LLYL…NKHC and YYPG…AHSC. Asn-499 and Asn-509 each carry an N-linked (GlcNAc...) asparagine glycan. An intrachain disulfide couples Cys-638 to Cys-665.

In terms of processing, the iron and 2-oxoglutarate dependent 3-hydroxylation of aspartate and asparagine is (R) stereospecific within EGF domains. As to expression, plasma.

It localises to the secreted. Its function is as follows. Anticoagulant plasma protein; it is a cofactor to activated protein C in the degradation of coagulation factors Va and VIIIa. It helps to prevent coagulation and stimulating fibrinolysis. The polypeptide is Vitamin K-dependent protein S (Pros1) (Mus musculus (Mouse)).